We begin with the raw amino-acid sequence, 27 residues long: Defensin-like protein 1 (27 aa).

The residue at position 1 (glutamine 1) is a Pyrrolidone carboxylic acid.

It belongs to the DEFL family. In terms of assembly, forms oligomers in its native state.

Possesses antifungal activity sensitive to inorganic cations. This chain is Defensin-like protein 1, found in Brassica campestris (Field mustard).